A 132-amino-acid chain; its full sequence is MQKLVLTLLVTSLLAGCSIFGVYKVDIPQGTPLTKAQASQVQVGMNFQQVRFLLGSPTVTDPLNPLRWDYIYNYIPGTYAKKAKIPAAHGQHLKIYFDGTGTVTKIEGLETIPESQPGLPASKEAILTAPPL.

The signal sequence occupies residues 1-16 (MQKLVLTLLVTSLLAG). The N-palmitoyl cysteine moiety is linked to residue Cys-17. Cys-17 carries S-diacylglycerol cysteine lipidation.

It belongs to the BamE family. Part of the Bam complex.

It localises to the cell outer membrane. Part of the outer membrane protein assembly complex, which is involved in assembly and insertion of beta-barrel proteins into the outer membrane. This is Outer membrane protein assembly factor BamE from Acinetobacter pittii (strain PHEA-2).